A 261-amino-acid chain; its full sequence is Large ribosomal subunit protein uL2 (261 aa).

The tract at residues 207–233 (VEHPHGGGNHQHIGKASTVKRGTPPGR) is disordered.

Belongs to the universal ribosomal protein uL2 family.

It is found in the cytoplasm. This chain is Large ribosomal subunit protein uL2 (RpL8), found in Aedes albopictus (Asian tiger mosquito).